Reading from the N-terminus, the 63-residue chain is Large ribosomal subunit protein bL28 (63 aa).

Residues 1–21 are disordered; sequence MSRRDDLTGKGPMFGNNRSHA.

It belongs to the bacterial ribosomal protein bL28 family.

The chain is Large ribosomal subunit protein bL28 from Mycoplasmopsis pulmonis (strain UAB CTIP) (Mycoplasma pulmonis).